A 363-amino-acid chain; its full sequence is NADH-quinone oxidoreductase subunit H (363 aa).

10 helical membrane-spanning segments follow: residues 29–49, 62–82, 96–116, 127–147, 163–183, 202–222, 238–257, 264–286, 299–319, and 339–359; these read VLKI…YVVW, GPMY…KLLF, FVIA…VVPF, VGLL…ILAG, AAQV…VMIA, FFDW…VSGV, EIVA…LFFL, ILVS…QGWV, KGGW…YIWF, and FIPL…YGVI.

The protein belongs to the complex I subunit 1 family. NDH-1 is composed of 14 different subunits. Subunits NuoA, H, J, K, L, M, N constitute the membrane sector of the complex.

It localises to the cell inner membrane. It catalyses the reaction a quinone + NADH + 5 H(+)(in) = a quinol + NAD(+) + 4 H(+)(out). In terms of biological role, NDH-1 shuttles electrons from NADH, via FMN and iron-sulfur (Fe-S) centers, to quinones in the respiratory chain. The immediate electron acceptor for the enzyme in this species is believed to be ubiquinone. Couples the redox reaction to proton translocation (for every two electrons transferred, four hydrogen ions are translocated across the cytoplasmic membrane), and thus conserves the redox energy in a proton gradient. This subunit may bind ubiquinone. In Xanthomonas euvesicatoria pv. vesicatoria (strain 85-10) (Xanthomonas campestris pv. vesicatoria), this protein is NADH-quinone oxidoreductase subunit H.